A 147-amino-acid polypeptide reads, in one-letter code: uncharacterized protein (147 aa).

It belongs to the RTX toxin acyltransferase family.

This is an uncharacterized protein from Synechocystis sp. (strain ATCC 27184 / PCC 6803 / Kazusa).